The following is a 349-amino-acid chain: Putative phytanoyl-CoA dioxygenase (349 aa).

2-oxoglutarate contacts are provided by residues K118 and 169-171 (HLD). Fe cation contacts are provided by H169 and D171.

The protein belongs to the PhyH family. It depends on Fe cation as a cofactor. L-ascorbate is required as a cofactor.

The catalysed reaction is phytanoyl-CoA + 2-oxoglutarate + O2 = 2-hydroxyphytanoyl-CoA + succinate + CO2. It functions in the pathway lipid metabolism; fatty acid metabolism. In terms of biological role, converts phytanoyl-CoA to 2-hydroxyphytanoyl-CoA. The polypeptide is Putative phytanoyl-CoA dioxygenase (Dictyostelium discoideum (Social amoeba)).